The primary structure comprises 354 residues: Abasic site processing protein HMCES (354 aa).

Catalysis depends on cysteine 2, which acts as the Nucleophile. Cysteine 2 is subject to Thiazolidine linkage to a ring-opened DNA abasic site. Residue glutamate 127 is part of the active site. Residues lysine 148 and lysine 151 each participate in a glycyl lysine isopeptide (Lys-Gly) (interchain with G-Cter in SUMO2) cross-link. At serine 160 the chain carries Phosphoserine. Residue lysine 276 forms a Glycyl lysine isopeptide (Lys-Gly) (interchain with G-Cter in SUMO2) linkage. The interval 292 to 354 (ATKSPKKEDS…EPVAKRPYSQ (63 aa)) is disordered. Serine 295 carries the post-translational modification Phosphoserine. The span at 296–309 (PKKEDSKTPQKEES) shows a compositional bias: basic and acidic residues. Lysine 306 is covalently cross-linked (Glycyl lysine isopeptide (Lys-Gly) (interchain with G-Cter in SUMO2)). The residue at position 322 (serine 322) is a Phosphoserine. The PIP-box motif lies at 332-338 (GLLEQWL). Positions 337–348 (WLKREKEEEPVA) are enriched in basic and acidic residues. Glycyl lysine isopeptide (Lys-Gly) (interchain with G-Cter in SUMO2) cross-links involve residues lysine 339 and lysine 342.

The protein belongs to the SOS response-associated peptidase family. Interacts (via PIP-box motif) with PCNA. Ubiquitinated; the covalent HMCES DNA-protein cross-link is ubiquitinated, leading to its degradation by the proteasome.

The protein localises to the chromosome. Formation and reversal of DNA-protein cross-link depends on DNA context. Catalyzes formation of the thiazolidine linkage in presence of abasic sites in single-stranded DNA. Mediates the reversal of the thiazolidine cross-link in presence of double stranded DNA. Sensor of abasic sites in single-stranded DNA (ssDNA) required to preserve genome integrity by promoting error-free repair of abasic sites. Acts as an enzyme that recognizes and binds abasic sites in ssDNA at replication forks and chemically modifies the lesion by forming a covalent cross-link with DNA: forms a stable thiazolidine linkage between a ring-opened abasic site and the alpha-amino and sulfhydryl substituents of its N-terminal catalytic cysteine residue. Promotes error-free repair by protecting abasic sites from translesion synthesis (TLS) polymerases and endonucleases that are error-prone and would generate mutations and double-strand breaks. The HMCES DNA-protein cross-link is then either reversed or degraded. HMCES is able to catalyze the reversal of its thiazolidine cross-link and cycle between a cross-link and a non-cross-linked state depending on DNA context: mediates self-reversal of the thiazolidine cross-link in double stranded DNA, allowing APEX1 to initiate downstream repair of abasic sites. The HMCES DNA-protein cross-link can also be degraded by the SPRTN metalloprotease following unfolding by the BRIP1/FANCJ helicase. Has preference for ssDNA, but can also accommodate double-stranded DNA with 3' or 5' overhang (dsDNA), and dsDNA-ssDNA 3' junction. Plays a protective role during somatic hypermutation of immunoglobulin genes in B-cells: acts via its ability to form covalent cross-links with abasic sites, thereby limiting the accumulation of deletions in somatic hypermutation target regions. Also involved in class switch recombination (CSR) in B-cells independently of the formation of a DNA-protein cross-link: acts by binding and protecting ssDNA overhangs to promote DNA double-strand break repair through the microhomology-mediated alternative-end-joining (Alt-EJ) pathway. Acts as a protease: mediates autocatalytic processing of its N-terminal methionine in order to expose the catalytic cysteine. This is Abasic site processing protein HMCES from Pongo abelii (Sumatran orangutan).